The following is a 234-amino-acid chain: Leucyl/phenylalanyl-tRNA--protein transferase (234 aa).

The protein belongs to the L/F-transferase family.

It localises to the cytoplasm. The catalysed reaction is N-terminal L-lysyl-[protein] + L-leucyl-tRNA(Leu) = N-terminal L-leucyl-L-lysyl-[protein] + tRNA(Leu) + H(+). It carries out the reaction N-terminal L-arginyl-[protein] + L-leucyl-tRNA(Leu) = N-terminal L-leucyl-L-arginyl-[protein] + tRNA(Leu) + H(+). The enzyme catalyses L-phenylalanyl-tRNA(Phe) + an N-terminal L-alpha-aminoacyl-[protein] = an N-terminal L-phenylalanyl-L-alpha-aminoacyl-[protein] + tRNA(Phe). Functions in the N-end rule pathway of protein degradation where it conjugates Leu, Phe and, less efficiently, Met from aminoacyl-tRNAs to the N-termini of proteins containing an N-terminal arginine or lysine. This Myxococcus xanthus (strain DK1622) protein is Leucyl/phenylalanyl-tRNA--protein transferase.